A 1145-amino-acid chain; its full sequence is DNA polymerase subunit gamma-1, mitochondrial (1145 aa).

A mitochondrion-targeting transit peptide spans 1–9 (MQFHLIRKY).

Belongs to the DNA polymerase type-A family. As to quaternary structure, component of the DNA polymerase gamma complex consisting of two subunits: the catalytic subunit DNApol-gamma/DNApolG1 and the accessory subunit PolG2/DNApol-gamma35. The cofactor is Mg(2+).

It is found in the mitochondrion. The enzyme catalyses DNA(n) + a 2'-deoxyribonucleoside 5'-triphosphate = DNA(n+1) + diphosphate. With respect to regulation, stimulated by KCl, and inhibited by the small molecules o 2',3'-dideoxythymidine 5'-triphosphate (d2TTP) and N-ethylmaleimide (NEM). Functionally, as the catalytic component of the DNA polymerase gamma complex is involved in the replication of mitochondrial DNA (mtDNA). Has both 5'-3' DNA polymerase and a highly mispair-specific 3'-5' exonuclease activity. At the end of mtDNA replication DNA ends are ligated to produce a closed circular mtDNA molecule, its exonuclease activity is required for formation of these ligatable ends by preventing DNA synthesis from continuing past the 5'-end of downstream DNA into duplex DNA regions. Does not possess DNA primase activity, does not catalyze strand displacement synthesis and does not contain a 5'-3' exonuclease activity to catalyze nick translation. Important for promoting the elimination of paternal mitochondrial DNA during spermatogenesis, however its exact role in this function has not yet been identified and appears to be independent of its 3'-5'-exonuclease activity and only partially dependent on its DNA polymerase activity. In Drosophila melanogaster (Fruit fly), this protein is DNA polymerase subunit gamma-1, mitochondrial.